The primary structure comprises 473 residues: Photosystem II CP43 reaction center protein (473 aa).

Positions 1 to 14 (MKTLYSLRRFYHVE) are excised as a propeptide. Threonine 15 bears the N-acetylthreonine mark. Threonine 15 is modified (phosphothreonine). A run of 5 helical transmembrane segments spans residues 69–93 (LFEVAHFVPEKPMYEQGLILLPHLA), 134–155 (LLGPETLEESFPFFGYVWKDRN), 178–200 (KALYFGGVYDTWAPGGGDVRKIT), 255–275 (KPFAWARRALVWSGEAYLSYS), and 291–312 (WFNNTVYPSEFYGPTGPEASQA). Residue glutamate 367 participates in [CaMn4O5] cluster binding. Residues 447-471 (RARAAAAGFEKGIDRDFEPVLSMTP) form a helical membrane-spanning segment.

It belongs to the PsbB/PsbC family. PsbC subfamily. PSII is composed of 1 copy each of membrane proteins PsbA, PsbB, PsbC, PsbD, PsbE, PsbF, PsbH, PsbI, PsbJ, PsbK, PsbL, PsbM, PsbT, PsbX, PsbY, PsbZ, Psb30/Ycf12, at least 3 peripheral proteins of the oxygen-evolving complex and a large number of cofactors. It forms dimeric complexes. It depends on Binds multiple chlorophylls and provides some of the ligands for the Ca-4Mn-5O cluster of the oxygen-evolving complex. It may also provide a ligand for a Cl- that is required for oxygen evolution. PSII binds additional chlorophylls, carotenoids and specific lipids. as a cofactor.

The protein localises to the plastid. It is found in the chloroplast thylakoid membrane. In terms of biological role, one of the components of the core complex of photosystem II (PSII). It binds chlorophyll and helps catalyze the primary light-induced photochemical processes of PSII. PSII is a light-driven water:plastoquinone oxidoreductase, using light energy to abstract electrons from H(2)O, generating O(2) and a proton gradient subsequently used for ATP formation. The protein is Photosystem II CP43 reaction center protein of Coffea arabica (Arabian coffee).